A 1483-amino-acid chain; its full sequence is Chromosome partition protein MukB (1483 aa).

An ATP-binding site is contributed by 34-41; the sequence is GGNGAGKS. Coiled-coil stretches lie at residues 326–418, 444–480, 509–601, 780–804, 837–923, 977–1115, and 1209–1265; these read LEAD…QYNQ, LETFQAKELEATEKMLSLEQKMSMAQTAHSQFEQAYQ, RHLA…MQRA, RAACESRIESLHAEREVLSERFATL, EIRQ…AKLE, EMLS…TAKA, and VEAI…LQNV. The interval 666 to 783 is flexible hinge; it reads PGGSEDQRLN…EVPLFGRAAC (118 aa).

This sequence belongs to the SMC family. MukB subfamily. Homodimerization via its hinge domain. Binds to DNA via its C-terminal region. Interacts, and probably forms a ternary complex, with MukE and MukF via its C-terminal region. The complex formation is stimulated by calcium or magnesium. Interacts with tubulin-related protein FtsZ.

The protein localises to the cytoplasm. It localises to the nucleoid. Its function is as follows. Plays a central role in chromosome condensation, segregation and cell cycle progression. Functions as a homodimer, which is essential for chromosome partition. Involved in negative DNA supercoiling in vivo, and by this means organize and compact chromosomes. May achieve or facilitate chromosome segregation by condensation DNA from both sides of a centrally located replisome during cell division. In Shigella dysenteriae serotype 1 (strain Sd197), this protein is Chromosome partition protein MukB.